The sequence spans 375 residues: Queuine tRNA-ribosyltransferase (375 aa).

The active-site Proton acceptor is aspartate 94. Residues 94 to 98, aspartate 148, glutamine 191, and glycine 218 contribute to the substrate site; that span reads DSGGF. The tract at residues 249-255 is RNA binding; sequence GVGTPED. The active-site Nucleophile is the aspartate 268. Residues 273-277 form an RNA binding; important for wobble base 34 recognition region; sequence TRIAR. Cysteine 306, cysteine 308, cysteine 311, and histidine 337 together coordinate Zn(2+).

This sequence belongs to the queuine tRNA-ribosyltransferase family. Homodimer. Within each dimer, one monomer is responsible for RNA recognition and catalysis, while the other monomer binds to the replacement base PreQ1. Zn(2+) serves as cofactor.

It carries out the reaction 7-aminomethyl-7-carbaguanine + guanosine(34) in tRNA = 7-aminomethyl-7-carbaguanosine(34) in tRNA + guanine. It functions in the pathway tRNA modification; tRNA-queuosine biosynthesis. In terms of biological role, catalyzes the base-exchange of a guanine (G) residue with the queuine precursor 7-aminomethyl-7-deazaguanine (PreQ1) at position 34 (anticodon wobble position) in tRNAs with GU(N) anticodons (tRNA-Asp, -Asn, -His and -Tyr). Catalysis occurs through a double-displacement mechanism. The nucleophile active site attacks the C1' of nucleotide 34 to detach the guanine base from the RNA, forming a covalent enzyme-RNA intermediate. The proton acceptor active site deprotonates the incoming PreQ1, allowing a nucleophilic attack on the C1' of the ribose to form the product. After dissociation, two additional enzymatic reactions on the tRNA convert PreQ1 to queuine (Q), resulting in the hypermodified nucleoside queuosine (7-(((4,5-cis-dihydroxy-2-cyclopenten-1-yl)amino)methyl)-7-deazaguanosine). This chain is Queuine tRNA-ribosyltransferase, found in Caldanaerobacter subterraneus subsp. tengcongensis (strain DSM 15242 / JCM 11007 / NBRC 100824 / MB4) (Thermoanaerobacter tengcongensis).